The chain runs to 405 residues: MNRTVMMALVIIFLDAMGIGIIMPVLPALLREFVGKANVAENYGVLLALYAMMQVIFAPLLGRWSDRIGRRPVLLLSLLGATLDYALMATASVVWVLYLGRLIAGITGATGAVAASTIADVTPEESRTHWFGMMGACFGGGMIAGPVIGGFAGQLSVQAPFMFAAAINGLAFLVSLFILHETHNANQVSDELKNETINETTSSIREMISPLSGLLVVFFIIQLIGQIPATLWVLFGEERFAWDGVMVGVSLAVFGLTHALFQGLAAGFIAKHLGERKAIAVGILADGCGLFLLAVITQSWMVWPVLLLLACGGITLPALQGIISVRVGQVAQGQLQGVLTSLTHLTAVIGPLVFAFLYSATRETWNGWVWIIGCGLYVVALIILRFFHPGRVIHPINKSDVQQRI.

12 helical membrane passes run 6–27 (MMALVIIFLDAMGIGIIMPVLP), 42–62 (NYGVLLALYAMMQVIFAPLLG), 74–94 (LLLSLLGATLDYALMATASVV), 102–122 (LIAGITGATGAVAASTIADVT), 131–151 (FGMMGACFGGGMIAGPVIGGF), 159–179 (APFMFAAAINGLAFLVSLFIL), 215–235 (LVVFFIIQLIGQIPATLWVLF), 245–265 (VMVGVSLAVFGLTHALFQGLA), 278–298 (AIAVGILADGCGLFLLAVITQ), 299–319 (SWMVWPVLLLLACGGITLPAL), 337–357 (GVLTSLTHLTAVIGPLVFAFL), and 364–385 (TWNGWVWIIGCGLYVVALIILR).

This sequence belongs to the major facilitator superfamily. TCR/Tet family.

It is found in the cell inner membrane. Resistance to tetracycline by an active tetracycline efflux. This is an energy-dependent process that decreases the accumulation of the antibiotic in whole cells. This protein functions as a metal-tetracycline/H(+) antiporter. This is Tetracycline resistance protein, class E (tetA) from Escherichia coli.